The following is a 207-amino-acid chain: Ras-related protein Rab-8B (207 aa).

Residues Ser-17, Gly-18, Val-19, Gly-20, Lys-21, Thr-22, Cys-23, Thr-35, Ser-39, and Thr-40 each coordinate GTP. Thr-22 is a Mg(2+) binding site. Short sequence motifs (switch) lie at residues 31 to 45 and 63 to 80; these read DAFN…GIDF and DTAG…YYRG. 2 residues coordinate Mg(2+): Thr-40 and Asp-63. Gly-66 serves as a coordination point for GTP. A Phosphothreonine modification is found at Thr-72. Asn-121, Lys-122, Asp-124, Ala-152, and Lys-153 together coordinate GTP. Phosphoserine is present on residues Ser-180 and Ser-183. The residue at position 204 (Cys-204) is a Cysteine methyl ester. Cys-204 is lipidated: S-geranylgeranyl cysteine. Positions 205–207 are cleaved as a propeptide — removed in mature form; the sequence is LLL.

The protein belongs to the small GTPase superfamily. Rab family. As to quaternary structure, associated with actin, delta-catenin and alpha and beta tubulins. Interacts with OTOF. Interacts with PEX5R. Interacts with RAB3IP. Interacts with VIM. Interacts with CDH1. Interacts with MICALL2. Interacts with GDI1, GDI2, CHML and CHM; phosphorylation at Thr-72 disrupts these interactions. Interacts with MICAL1. Mg(2+) is required as a cofactor. Phosphorylation of Thr-72 in the switch II region by LRRK2 prevents the association of RAB regulatory proteins, including CHM, CHML and RAB GDP dissociation inhibitors GDI1 and GDI2.

The protein resides in the cell membrane. It is found in the cytoplasmic vesicle. Its subcellular location is the phagosome membrane. The protein localises to the endosome membrane. The catalysed reaction is GTP + H2O = GDP + phosphate + H(+). Regulated by guanine nucleotide exchange factors (GEFs) including RAB3IP/RABIN8 which promotes the exchange of bound GDP for free GTP. Regulated by GTPase activating proteins (GAPs) which increase the GTP hydrolysis activity. Inhibited by GDP dissociation inhibitors (GDIs). The small GTPases Rab are key regulators of intracellular membrane trafficking, from the formation of transport vesicles to their fusion with membranes. Rabs cycle between an inactive GDP-bound form and an active GTP-bound form that is able to recruit to membranes different sets of downstream effectors directly responsible for vesicle formation, movement, tethering and fusion. RAB8B may be involved in polarized vesicular trafficking and neurotransmitter release. May participate in cell junction dynamics in Sertoli cells. May also participate in the export of a subset of neosynthesized proteins through a Rab8-Rab10-Rab11-dependent endososomal export route. The sequence is that of Ras-related protein Rab-8B (RAB8B) from Bos taurus (Bovine).